The following is a 69-amino-acid chain: Putative membrane protein insertion efficiency factor (69 aa).

This sequence belongs to the UPF0161 family.

The protein localises to the cell inner membrane. Could be involved in insertion of integral membrane proteins into the membrane. This is Putative membrane protein insertion efficiency factor from Syntrophotalea carbinolica (strain DSM 2380 / NBRC 103641 / GraBd1) (Pelobacter carbinolicus).